The sequence spans 152 residues: Transcriptional regulator MraZ (152 aa).

2 consecutive SpoVT-AbrB domains span residues 5-52 and 81-124; these read TSAI…PLPE and ASDC…HDTA.

The protein belongs to the MraZ family. In terms of assembly, forms oligomers.

Its subcellular location is the cytoplasm. The protein localises to the nucleoid. In Colwellia psychrerythraea (strain 34H / ATCC BAA-681) (Vibrio psychroerythus), this protein is Transcriptional regulator MraZ.